We begin with the raw amino-acid sequence, 382 residues long: Mannitol-1-phosphate 5-dehydrogenase (382 aa).

An NAD(+)-binding site is contributed by A3–G14. K269 bears the N6-acetyllysine mark.

This sequence belongs to the mannitol dehydrogenase family.

It catalyses the reaction D-mannitol 1-phosphate + NAD(+) = beta-D-fructose 6-phosphate + NADH + H(+). The sequence is that of Mannitol-1-phosphate 5-dehydrogenase from Escherichia coli (strain K12 / MC4100 / BW2952).